Reading from the N-terminus, the 171-residue chain is Neuronal vesicle trafficking-associated protein 2 (171 aa).

Positions 1–21 are disordered; it reads MVKLNSNPGEKGAKPPSVEDG. Residues 1 to 71 are Cytoplasmic-facing; sequence MVKLNSNPGE…FRVPKIAEFT (71 aa). A helical; Signal-anchor for type II membrane protein membrane pass occupies residues 72–92; sequence VTILVSLALAFLACIVFLVVY. The Lumenal segment spans residues 93-171; it reads KAFTYDHSCP…EPKPPKTQGH (79 aa).

The protein belongs to the NSG family. As to expression, specifically expressed in neural and neuroendocrine tissues. Pituitary and less in adrenal gland and testis. Expressed in the hippocampus throughout development. Remains enriched in layer V cortical neurons during development. At P0, broadly expressed in the neocortex. Is down-regulated overall at P8 and P14, but remains relatively enriched in layer V. At P0 is lower expressed in the cerebellum. Expression remains low throughout development, and is undetectable by adulthood.

It localises to the membrane. The protein localises to the golgi apparatus. It is found in the trans-Golgi network membrane. The protein resides in the cell projection. Its subcellular location is the dendrite. It localises to the endosome membrane. The protein localises to the early endosome membrane. It is found in the late endosome membrane. The protein resides in the lysosome lumen. Its subcellular location is the cytoplasmic vesicle membrane. It localises to the golgi stack membrane. The protein localises to the endosome. It is found in the multivesicular body membrane. The polypeptide is Neuronal vesicle trafficking-associated protein 2 (Mus musculus (Mouse)).